The sequence spans 475 residues: FAD-dependent monooxygenase sdgC (475 aa).

Positions 1–23 (MDKRSFKVIVVGGSIAGLTLAHS) are cleaved as a signal peptide. The FAD site is built by glutamate 35, glycine 49, and arginine 126. Asparagine 236 carries N-linked (GlcNAc...) asparagine glycosylation. Residue alanine 330 participates in FAD binding. A helical transmembrane segment spans residues 446–466 (ISGVLLLVIPIIALVYGYSVI).

The protein belongs to the paxM FAD-dependent monooxygenase family. The cofactor is FAD.

The protein localises to the membrane. Its pathway is secondary metabolite biosynthesis. In terms of biological role, FAD-dependent monooxygenase; part of the gene cluster that mediates the biosynthesis of the polyenes aspernidgulenes. The carbon backbone of aspernidgulenes is synthesized by the HR-PKS sdgA, which accepts acetyl-CoA as the starter unit and performs malonyl-CoA extensions as well as regioselective methylation and reduction. The resulting nonaketide offloads the HR-PKS by intramolecular lactonization to yield the 5,6-dihydro-alpha-pyrone-containing hexaenoic acids preaspernidgulene A1 and A2. The FAD-dependent monooxygenase sdgC then installs the first epoxide on the penultimate double bond. Subsequently, the FAD-dependent monooxygenase sdgF presumably generates a ketone intermediate through Meinwald rearrangement involving a hydride shift. Next, sdgC introduces another epoxide on the last olefin of the ketone intermediate after E/Z isomerization. The epoxide hydrolase sdgD then catalyzes stereospecific cyclization of the 5,6-dihydro-alpha-pyrone and opening of the epoxide ring to form an oxygenated trimethylcyclopentanone and an oxabicyclo[2.2.1]heptane unit. Finally, the bicyclic unit undergoes hydrolytic cleavage, either spontaneously or catalyzed by sdgD, to assemble the dimethyl-gamma-lactone moiety in aspernidgulene A1. The chain is FAD-dependent monooxygenase sdgC from Emericella nidulans (strain FGSC A4 / ATCC 38163 / CBS 112.46 / NRRL 194 / M139) (Aspergillus nidulans).